A 434-amino-acid polypeptide reads, in one-letter code: Nicotinate phosphoribosyltransferase (434 aa).

His242 bears the Phosphohistidine; by autocatalysis mark.

Belongs to the NAPRTase family. Transiently phosphorylated on a His residue during the reaction cycle. Phosphorylation strongly increases the affinity for substrates and increases the rate of nicotinate D-ribonucleotide production. Dephosphorylation regenerates the low-affinity form of the enzyme, leading to product release.

The enzyme catalyses nicotinate + 5-phospho-alpha-D-ribose 1-diphosphate + ATP + H2O = nicotinate beta-D-ribonucleotide + ADP + phosphate + diphosphate. Its pathway is cofactor biosynthesis; NAD(+) biosynthesis; nicotinate D-ribonucleotide from nicotinate: step 1/1. Functionally, catalyzes the synthesis of beta-nicotinate D-ribonucleotide from nicotinate and 5-phospho-D-ribose 1-phosphate at the expense of ATP. The polypeptide is Nicotinate phosphoribosyltransferase (Agrobacterium fabrum (strain C58 / ATCC 33970) (Agrobacterium tumefaciens (strain C58))).